The chain runs to 419 residues: MSTLEEVLSEAYKLVIPSEEEEKRIREVTQKVKRLVSQIIEEGGIDALVDVYGSGARGTWLPGQRDIDIFVVLNDRRIKPEDVVKILTSRFTTLGLNWALRYAQHPYVSLQVDDYEVDIVPCYKIQPGERPITAADRSPLHHKFLSERLKKDQILDVRLLKLFLKTIGVYGAEIKTEGFSGYLTELLVVYYGSFIEVLRAASRWRPYKTYITFVETSAKFKSPLVVVDPVDPNRNAAAAVSLTSMSTLILAARRFLKKPSLSYFQPSRGYAIRQVETVEVVYPYPGEPPDIVWGKYKRIGRNLFKWLRECGFKVFRWGVESDEKTYVKLVYVVEQTKLAPYTLHKGPPVYDDAVDAFIEKYVNEEVIGPFVVGARAYVIKKRKWTDISHCINAKLGKGNYDIRVNLYDGDLVRKTPWLT.

Ser-54 and Arg-57 together coordinate ATP. Residues Ser-54 and Arg-57 each coordinate CTP. Residues Asp-66, Asp-68, and Asp-118 each coordinate Mg(2+). ATP-binding residues include His-141, Lys-161, and Tyr-170. 3 residues coordinate CTP: His-141, Lys-161, and Tyr-170.

It belongs to the tRNA nucleotidyltransferase/poly(A) polymerase family. Archaeal CCA-adding enzyme subfamily. In terms of assembly, homodimer. The cofactor is Mg(2+).

It carries out the reaction a tRNA precursor + 2 CTP + ATP = a tRNA with a 3' CCA end + 3 diphosphate. The enzyme catalyses a tRNA with a 3' CCA end + 2 CTP + ATP = a tRNA with a 3' CCACCA end + 3 diphosphate. Functionally, catalyzes the addition and repair of the essential 3'-terminal CCA sequence in tRNAs without using a nucleic acid template. Adds these three nucleotides in the order of C, C, and A to the tRNA nucleotide-73, using CTP and ATP as substrates and producing inorganic pyrophosphate. tRNA 3'-terminal CCA addition is required both for tRNA processing and repair. Also involved in tRNA surveillance by mediating tandem CCA addition to generate a CCACCA at the 3' terminus of unstable tRNAs. While stable tRNAs receive only 3'-terminal CCA, unstable tRNAs are marked with CCACCA and rapidly degraded. This chain is CCA-adding enzyme, found in Pyrobaculum aerophilum (strain ATCC 51768 / DSM 7523 / JCM 9630 / CIP 104966 / NBRC 100827 / IM2).